The chain runs to 472 residues: Na(+)/H(+) antiporter NhaA (472 aa).

10 helical membrane passes run 24-44 (ISGL…NLPA), 66-86 (LPIG…TVGL), 108-128 (LCAV…TALF), 156-176 (GWAV…ALFA), 196-216 (LLAI…YWFI), 234-254 (VPWI…FEAG), 290-310 (PFSA…VHFE), 312-332 (MSPL…LVVG), 361-381 (MIPA…IASL), and 392-412 (ARFG…VLLS). Residues 422-472 (AAAAAADEEDDESIDGDGIGQPSHTTEPTTPTEHPGTLADGTASVEIDFRH) form a disordered region. A compositionally biased stretch (acidic residues) spans 427 to 436 (ADEEDDESID). Low complexity predominate over residues 445–456 (HTTEPTTPTEHP).

The protein belongs to the NhaA Na(+)/H(+) (TC 2.A.33) antiporter family.

It is found in the cell membrane. It catalyses the reaction Na(+)(in) + 2 H(+)(out) = Na(+)(out) + 2 H(+)(in). Functionally, na(+)/H(+) antiporter that extrudes sodium in exchange for external protons. The sequence is that of Na(+)/H(+) antiporter NhaA from Bifidobacterium longum (strain NCC 2705).